The following is a 158-amino-acid chain: Ribonuclease H (158 aa).

The RNase H type-1 domain occupies 1-142 (MRKQVEIFTD…CDELARAAAM (142 aa)). Asp-10, Glu-48, Asp-70, and Asp-134 together coordinate Mg(2+).

The protein belongs to the RNase H family. In terms of assembly, monomer. Requires Mg(2+) as cofactor.

It localises to the cytoplasm. It catalyses the reaction Endonucleolytic cleavage to 5'-phosphomonoester.. Endonuclease that specifically degrades the RNA of RNA-DNA hybrids. The chain is Ribonuclease H from Cronobacter sakazakii (strain ATCC BAA-894) (Enterobacter sakazakii).